Consider the following 174-residue polypeptide: Transmembrane protein 208 (174 aa).

3 consecutive transmembrane segments (helical) span residues 30–50 (NMAI…FEVT), 54–74 (VFMH…MAFM), and 111–131 (GTLL…LAPI). The tract at residues 151–174 (AQDDNPQVDEKKQKKMDRRMRRMR) is disordered. Residues 163 to 174 (QKKMDRRMRRMR) are compositionally biased toward basic residues.

This sequence belongs to the TMEM208 family. Interacts with fz. In terms of tissue distribution, expressed in the brain.

The protein localises to the endoplasmic reticulum membrane. May play an important role during development and helps to maintain proper levels of Fz. This chain is Transmembrane protein 208, found in Drosophila melanogaster (Fruit fly).